Reading from the N-terminus, the 322-residue chain is N-acetyl-gamma-glutamyl-phosphate reductase (322 aa).

The active site involves C132.

Belongs to the NAGSA dehydrogenase family. Type 1 subfamily.

It is found in the cytoplasm. It carries out the reaction N-acetyl-L-glutamate 5-semialdehyde + phosphate + NADP(+) = N-acetyl-L-glutamyl 5-phosphate + NADPH + H(+). It functions in the pathway amino-acid biosynthesis; L-arginine biosynthesis; N(2)-acetyl-L-ornithine from L-glutamate: step 3/4. Functionally, catalyzes the NADPH-dependent reduction of N-acetyl-5-glutamyl phosphate to yield N-acetyl-L-glutamate 5-semialdehyde. This chain is N-acetyl-gamma-glutamyl-phosphate reductase, found in Bacteroides thetaiotaomicron (strain ATCC 29148 / DSM 2079 / JCM 5827 / CCUG 10774 / NCTC 10582 / VPI-5482 / E50).